We begin with the raw amino-acid sequence, 115 residues long: U3-lycotoxin-Ls1a (115 aa).

Residues 1-20 (MKFVLLFGVLLVTLFSYSSA) form the signal peptide. A propeptide spanning residues 21-44 (EMLDDFDQADEEELLSLIEKEEAR) is cleaved from the precursor. 4 cysteine pairs are disulfide-bonded: C48–C63, C55–C72, C62–C87, and C74–C85.

It belongs to the neurotoxin 19 (CSTX) family. 01 subfamily. Expressed by the venom gland.

Its subcellular location is the secreted. The polypeptide is U3-lycotoxin-Ls1a (Lycosa singoriensis (Wolf spider)).